The following is a 235-amino-acid chain: Phosphoribosylformylglycinamidine synthase subunit PurQ (235 aa).

One can recognise a Glutamine amidotransferase type-1 domain in the interval 4–234 (GILVFPGTNC…VQHLTGRVIR (231 aa)). The active-site Nucleophile is Cys-86. Residues His-203 and Glu-205 contribute to the active site.

As to quaternary structure, part of the FGAM synthase complex composed of 1 PurL, 1 PurQ and 2 PurS subunits.

It is found in the cytoplasm. The enzyme catalyses N(2)-formyl-N(1)-(5-phospho-beta-D-ribosyl)glycinamide + L-glutamine + ATP + H2O = 2-formamido-N(1)-(5-O-phospho-beta-D-ribosyl)acetamidine + L-glutamate + ADP + phosphate + H(+). It catalyses the reaction L-glutamine + H2O = L-glutamate + NH4(+). The protein operates within purine metabolism; IMP biosynthesis via de novo pathway; 5-amino-1-(5-phospho-D-ribosyl)imidazole from N(2)-formyl-N(1)-(5-phospho-D-ribosyl)glycinamide: step 1/2. In terms of biological role, part of the phosphoribosylformylglycinamidine synthase complex involved in the purines biosynthetic pathway. Catalyzes the ATP-dependent conversion of formylglycinamide ribonucleotide (FGAR) and glutamine to yield formylglycinamidine ribonucleotide (FGAM) and glutamate. The FGAM synthase complex is composed of three subunits. PurQ produces an ammonia molecule by converting glutamine to glutamate. PurL transfers the ammonia molecule to FGAR to form FGAM in an ATP-dependent manner. PurS interacts with PurQ and PurL and is thought to assist in the transfer of the ammonia molecule from PurQ to PurL. The sequence is that of Phosphoribosylformylglycinamidine synthase subunit PurQ from Symbiobacterium thermophilum (strain DSM 24528 / JCM 14929 / IAM 14863 / T).